The following is a 1230-amino-acid chain: DNA-directed RNA polymerase, mitochondrial (1230 aa).

Residues Met-1–Ser-41 constitute a mitochondrion transit peptide. 3 disordered regions span residues Arg-18–Lys-55, Gly-95–Thr-115, and Val-731–Ala-750. Pro residues predominate over residues Pro-732–Ala-744. The tract at residues Phe-802–Ser-1230 is mediates interaction with TEFM. Catalysis depends on residues Asp-922, Lys-991, and Asp-1151.

Belongs to the phage and mitochondrial RNA polymerase family. Homodimer. Component of the mitochondrial transcription initiation complex, composed at least of TFB2M, TFAM and POLRMT. In this complex TFAM recruits POLRMT to the promoter whereas TFB2M induces structural changes in POLRMT to enable promoter opening and trapping of the DNA non-template strand. Upon metabolic stress, forms a complex composed of FOXO3, SIRT3 and mitochondrial RNA polymerase POLRMT; the complex is recruited to mtDNA in a SIRT3-dependent manner. Also forms a complex composed of FOXO3, SIRT3, TFAM and POLRMT. Interacts with TFB1M and TFB2M, leading to the stimulation of transcription. Interacts with TEFM. Interacts with MTRES1.

It localises to the mitochondrion. The enzyme catalyses RNA(n) + a ribonucleoside 5'-triphosphate = RNA(n+1) + diphosphate. In terms of biological role, DNA-dependent RNA polymerase catalyzes the transcription of mitochondrial DNA into RNA using the four ribonucleoside triphosphates as substrates. Component of the mitochondrial transcription initiation complex, composed at least of TFB2M, TFAM and POLRMT that is required for basal transcription of mitochondrial DNA. In this complex, TFAM recruits POLRMT to a specific promoter whereas TFB2M induces structural changes in POLRMT to enable promoter opening and trapping of the DNA non-template strand. Has DNA primase activity. Catalyzes the synthesis of short RNA primers that are necessary for the initiation of lagging-strand DNA synthesis from the origin of light-strand DNA replication (OriL). The protein is DNA-directed RNA polymerase, mitochondrial of Homo sapiens (Human).